Here is a 39-residue protein sequence, read N- to C-terminus: Anthranilate phosphoribosyltransferase (39 aa).

The protein belongs to the anthranilate phosphoribosyltransferase family. As to quaternary structure, homodimer.

It carries out the reaction N-(5-phospho-beta-D-ribosyl)anthranilate + diphosphate = 5-phospho-alpha-D-ribose 1-diphosphate + anthranilate. Its pathway is amino-acid biosynthesis; L-tryptophan biosynthesis; L-tryptophan from chorismate: step 2/5. Functionally, catalyzes the transfer of the phosphoribosyl group of 5-phosphorylribose-1-pyrophosphate (PRPP) to anthranilate to yield N-(5'-phosphoribosyl)-anthranilate (PRA). The polypeptide is Anthranilate phosphoribosyltransferase (trpD) (Pectobacterium carotovorum (Erwinia carotovora)).